The chain runs to 634 residues: Dachshund homolog 2 (634 aa).

The DACHbox-N stretch occupies residues 76–162 (RMVDMHGVKV…LITRKDFETL (87 aa)). Disordered regions lie at residues 171–194 (RKRQ…KRSL), 244–286 (LQGN…SGPQ), and 378–416 (IPES…MDHH). A compositionally biased stretch (polar residues) spans 244-269 (LQGNGSQNGTESEPDDLNSTTGGSES). Over residues 396–412 (SQTSSHPSSSVSSSPSQ) the composition is skewed to low complexity. The interval 488-568 (SSVETLLTNI…KAKRKLQEAL (81 aa)) is DACHbox-C. Residues 494–588 (LTNIQGLLKV…EQALKQATSG (95 aa)) adopt a coiled-coil conformation.

This sequence belongs to the DACH/dachshund family. In terms of assembly, interacts with SIX6. Interacts with EYA2. Expressed in embryo, and at lower levels in the newborn.

It localises to the nucleus. In terms of biological role, transcription factor that is involved in regulation of organogenesis. Seems to be a regulator for SIX1 and SIX6. Seems to act as a corepressor of SIX6 in regulating proliferation by directly repressing cyclin-dependent kinase inhibitors, including the p27Kip1 promoter. Is recruited with SIX6 to the p27Kip1 promoter in embryonal retina. SIX6 corepression also seems to involve NCOR1, TBL1, HDAC1 and HDAC3. May be involved together with PAX3, SIX1, and EYA2 in regulation of myogenesis. In the developing somite, expression of DACH2 and PAX3 is regulated by the overlying ectoderm, and DACH2 and PAX3 positively regulate each other's expression. Probably binds to DNA via its DACHbox-N domain. This is Dachshund homolog 2 (Dach2) from Mus musculus (Mouse).